Reading from the N-terminus, the 293-residue chain is Probable metal transport system membrane protein CT_417 (293 aa).

A run of 7 helical transmembrane segments spans residues 18-38, 41-61, 68-88, 101-121, 135-155, 187-207, and 242-262; these read SLLA…YIVV, IVSI…IALW, LPIS…ICIG, IISM…SKLP, ILWV…FIVA, LLLI…GVIL, and FLGI…IAIL.

Belongs to the ABC-3 integral membrane protein family.

Its subcellular location is the cell inner membrane. Its function is as follows. Part of an ATP-driven transport system CT_415/CT_416/CT_417 for a metal. In Chlamydia trachomatis serovar D (strain ATCC VR-885 / DSM 19411 / UW-3/Cx), this protein is Probable metal transport system membrane protein CT_417.